Here is a 190-residue protein sequence, read N- to C-terminus: Shikimate kinase (190 aa).

Residue 15–20 (GSGKST) participates in ATP binding. Ser19 contacts Mg(2+). Positions 37, 61, and 83 each coordinate substrate. ATP is bound at residue Arg121. Arg148 contacts substrate.

Belongs to the shikimate kinase family. As to quaternary structure, monomer. Mg(2+) is required as a cofactor.

The protein localises to the cytoplasm. It catalyses the reaction shikimate + ATP = 3-phosphoshikimate + ADP + H(+). It functions in the pathway metabolic intermediate biosynthesis; chorismate biosynthesis; chorismate from D-erythrose 4-phosphate and phosphoenolpyruvate: step 5/7. Functionally, catalyzes the specific phosphorylation of the 3-hydroxyl group of shikimic acid using ATP as a cosubstrate. The protein is Shikimate kinase of Chlorobium chlorochromatii (strain CaD3).